Here is a 360-residue protein sequence, read N- to C-terminus: MAAAAAAGAGPEMVRGQVFDVGPRYTNLSYIGEGAYGMVCSAYDNVNKVRVAIKKISPFEHQTYCQRTLREIKILLRFRHENIIGINDIIRAPTIEQMKDVYIVQDLMETDLYKLLKTQHLSNDHICYFLYQILRGLKYIHSANVLHRDLKPSNLLLNTTCDLKICDFGLARVADPDHDHTGFLTEYVATRWYRAPEIMLNSKGYTKSIDIWSVGCILAEMLSNRPIFPGKHYLDQLNHILGILGSPSQEDLNCIINLKARNYLLSLPHKNKVPWNRLFPNADSKALDLLDKMLTFNPHKRIEVEQALAHPYLEQYYDPSDEPIAEAPFKFDMELDDLPKEKLKELIFEETARFQPGYRS.

Position 2 is an N-acetylalanine (Ala2). A Protein kinase domain is found at 25–313 (YTNLSYIGEG…VEQALAHPYL (289 aa)). Ser29 carries the post-translational modification Phosphoserine; by SGK1. Residues 31–39 (IGEGAYGMV) and Lys54 contribute to the ATP site. Residue Asp149 is the Proton acceptor of the active site. Phosphothreonine; by MAP2K1 and MAP2K2 is present on Thr185. The TXY motif lies at 185–187 (TEY). Tyr187 carries the phosphotyrosine; by MAP2K1 and MAP2K2 modification. A Phosphothreonine; by autocatalysis modification is found at Thr190. Ser246 and Ser248 each carry phosphoserine. The DNA-binding element occupies 259–277 (KARNYLLSLPHKNKVPWNR). Ser284 is modified (phosphoserine). The short motif at 318–322 (DPSDE) is the Cytoplasmic retention motif element. Residues 327-333 (APFKFDM) carry the Nuclear translocation motif motif.

It belongs to the protein kinase superfamily. CMGC Ser/Thr protein kinase family. MAP kinase subfamily. As to quaternary structure, binds both upstream activators and downstream substrates in multimolecular complexes. This interaction inhibits its tyrosine-kinase activity. Interacts with ADAM15, ARHGEF2, ARRB2, DAPK1 (via death domain), HSF4, IER3, IPO7, NISCH, SGK1, and isoform 1 of NEK2. Interacts (via phosphorylated form) with TPR (via C-terminal region and phosphorylated form); the interaction requires dimerization of MAPK1/ERK2 and increases following EGF stimulation. Interacts with MAP2K1. Interacts with DUSP6. Interacts (phosphorylated form) with CAV2 ('Tyr-19'-phosphorylated form); the interaction, promoted by insulin, leads to nuclear location and MAPK1 activation. Interacts with MORG1, PEA15 and MKNK2. MKNK2 isoform 1 binding prevents from dephosphorylation and inactivation. Interacts with DCC. The phosphorylated form interacts with PML (isoform PML-4). Interacts with STYX. Interacts with CDK2AP2. Interacts with CAVIN4. Interacts with DUSP7; the interaction enhances DUSP7 phosphatase activity. Interacts with GIT1; this interaction is necessary for MAPK1 localization to focal adhesions. Interacts with ZNF263. Interacts with phosphoglycerate kinase PGK1; the interaction is direct, occurs under hypoxic conditions, and promotes interaction between PGK1 and PIN1. (Microbial infection) Interacts with HIV-1 Nef through its SH3 domain. The cofactor is Mg(2+). In terms of processing, phosphorylated upon KIT and FLT3 signaling. Dually phosphorylated on Thr-185 and Tyr-187, which activates the enzyme. Undergoes regulatory phosphorylation on additional residues such as Ser-246 and Ser-248 in the kinase insert domain (KID) These phosphorylations, which are probably mediated by more than one kinase, are important for binding of MAPK1/ERK2 to importin-7 (IPO7) and its nuclear translocation. In addition, autophosphorylation of Thr-190 was shown to affect the subcellular localization of MAPK1/ERK2 as well. Ligand-activated ALK induces tyrosine phosphorylation. Dephosphorylated by PTPRJ at Tyr-187. Phosphorylation on Ser-29 by SGK1 results in its activation by enhancing its interaction with MAP2K1/MEK1 and MAP2K2/MEK2. DUSP3 and DUSP6 dephosphorylate specifically MAPK1/ERK2 and MAPK3/ERK1 whereas DUSP9 dephosphorylates a broader range of MAPKs. Dephosphorylated by DUSP1 and DUSP2 at Thr-185 and Tyr-187. Post-translationally, ISGylated. Ubiquitinated by TRIM15 via 'Lys-63'-linked ubiquitination; leading to activation. Deubiquitinated by CYLD.

The protein localises to the cytoplasm. The protein resides in the cytoskeleton. It localises to the spindle. Its subcellular location is the nucleus. It is found in the microtubule organizing center. The protein localises to the centrosome. The protein resides in the membrane. It localises to the caveola. Its subcellular location is the cell junction. It is found in the focal adhesion. The catalysed reaction is L-seryl-[protein] + ATP = O-phospho-L-seryl-[protein] + ADP + H(+). It catalyses the reaction L-threonyl-[protein] + ATP = O-phospho-L-threonyl-[protein] + ADP + H(+). Its activity is regulated as follows. Phosphorylated by MAP2K1/MEK1 and MAP2K2/MEK2 on Thr-185 and Tyr-187 in response to external stimuli like insulin or NGF. Both phosphorylations are required for activity. This phosphorylation causes dramatic conformational changes, which enable full activation and interaction of MAPK1/ERK2 with its substrates. Phosphorylation on Ser-29 by SGK1 results in its activation by enhancing its interaction with MAP2K1/MEK1 and MAP2K2/MEK2. Dephosphorylated and inactivated by DUSP1, DUSP3, DUSP6 and DUSP9. Inactivated by pyrimidylpyrrole inhibitors. Its function is as follows. Serine/threonine kinase which acts as an essential component of the MAP kinase signal transduction pathway. MAPK1/ERK2 and MAPK3/ERK1 are the 2 MAPKs which play an important role in the MAPK/ERK cascade. They participate also in a signaling cascade initiated by activated KIT and KITLG/SCF. Depending on the cellular context, the MAPK/ERK cascade mediates diverse biological functions such as cell growth, adhesion, survival and differentiation through the regulation of transcription, translation, cytoskeletal rearrangements. The MAPK/ERK cascade also plays a role in initiation and regulation of meiosis, mitosis, and postmitotic functions in differentiated cells by phosphorylating a number of transcription factors. About 160 substrates have already been discovered for ERKs. Many of these substrates are localized in the nucleus, and seem to participate in the regulation of transcription upon stimulation. However, other substrates are found in the cytosol as well as in other cellular organelles, and those are responsible for processes such as translation, mitosis and apoptosis. Moreover, the MAPK/ERK cascade is also involved in the regulation of the endosomal dynamics, including lysosome processing and endosome cycling through the perinuclear recycling compartment (PNRC); as well as in the fragmentation of the Golgi apparatus during mitosis. The substrates include transcription factors (such as ATF2, BCL6, ELK1, ERF, FOS, HSF4 or SPZ1), cytoskeletal elements (such as CANX, CTTN, GJA1, MAP2, MAPT, PXN, SORBS3 or STMN1), regulators of apoptosis (such as BAD, BTG2, CASP9, DAPK1, IER3, MCL1 or PPARG), regulators of translation (such as EIF4EBP1 and FXR1) and a variety of other signaling-related molecules (like ARHGEF2, DCC, FRS2 or GRB10). Protein kinases (such as RAF1, RPS6KA1/RSK1, RPS6KA3/RSK2, RPS6KA2/RSK3, RPS6KA6/RSK4, SYK, MKNK1/MNK1, MKNK2/MNK2, RPS6KA5/MSK1, RPS6KA4/MSK2, MAPKAPK3 or MAPKAPK5) and phosphatases (such as DUSP1, DUSP4, DUSP6 or DUSP16) are other substrates which enable the propagation the MAPK/ERK signal to additional cytosolic and nuclear targets, thereby extending the specificity of the cascade. Mediates phosphorylation of TPR in response to EGF stimulation. May play a role in the spindle assembly checkpoint. Phosphorylates PML and promotes its interaction with PIN1, leading to PML degradation. Phosphorylates CDK2AP2. Phosphorylates phosphoglycerate kinase PGK1 under hypoxic conditions to promote its targeting to the mitochondrion and suppress the formation of acetyl-coenzyme A from pyruvate. Acts as a transcriptional repressor. Binds to a [GC]AAA[GC] consensus sequence. Repress the expression of interferon gamma-induced genes. Seems to bind to the promoter of CCL5, DMP1, IFIH1, IFITM1, IRF7, IRF9, LAMP3, OAS1, OAS2, OAS3 and STAT1. Transcriptional activity is independent of kinase activity. The polypeptide is Mitogen-activated protein kinase 1 (Homo sapiens (Human)).